The sequence spans 354 residues: Protein RecA (354 aa).

67–74 (GPESSGKT) serves as a coordination point for ATP.

The protein belongs to the RecA family.

It is found in the cytoplasm. Can catalyze the hydrolysis of ATP in the presence of single-stranded DNA, the ATP-dependent uptake of single-stranded DNA by duplex DNA, and the ATP-dependent hybridization of homologous single-stranded DNAs. It interacts with LexA causing its activation and leading to its autocatalytic cleavage. This chain is Protein RecA, found in Hamiltonella defensa subsp. Acyrthosiphon pisum (strain 5AT).